Consider the following 507-residue polypeptide: Anaerobic nitric oxide reductase transcription regulator NorR (507 aa).

A 4-aspartylphosphate modification is found at Asp-57. The region spanning Ile-188–Ile-417 is the Sigma-54 factor interaction domain. ATP-binding positions include Gly-216–Glu-223 and Ala-279–Glu-288. The H-T-H motif DNA-binding region spans Trp-483–Lys-502.

It participates in nitrogen metabolism; nitric oxide reduction. Functionally, required for the expression of anaerobic nitric oxide (NO) reductase, acts as a transcriptional activator for at least the norVW operon. Activation also requires sigma-54. In Serratia proteamaculans (strain 568), this protein is Anaerobic nitric oxide reductase transcription regulator NorR.